A 305-amino-acid chain; its full sequence is tRNA N6-adenosine threonylcarbamoyltransferase (305 aa).

Positions 108 and 112 each coordinate Fe cation. Residues 130 to 134 (VVSGG), D163, G176, D180, and N264 contribute to the substrate site. Position 288 (D288) interacts with Fe cation.

It belongs to the KAE1 / TsaD family. The cofactor is Fe(2+).

It localises to the cytoplasm. It catalyses the reaction L-threonylcarbamoyladenylate + adenosine(37) in tRNA = N(6)-L-threonylcarbamoyladenosine(37) in tRNA + AMP + H(+). Its function is as follows. Required for the formation of a threonylcarbamoyl group on adenosine at position 37 (t(6)A37) in tRNAs that read codons beginning with adenine. Is involved in the transfer of the threonylcarbamoyl moiety of threonylcarbamoyl-AMP (TC-AMP) to the N6 group of A37, together with TsaE and TsaB. TsaD likely plays a direct catalytic role in this reaction. This Mycoplasma mobile (strain ATCC 43663 / 163K / NCTC 11711) (Mesomycoplasma mobile) protein is tRNA N6-adenosine threonylcarbamoyltransferase.